The chain runs to 131 residues: D-ribose pyranase (131 aa).

The active-site Proton donor is the histidine 20. Residues aspartate 28, histidine 98, and 120–122 each bind substrate; that span reads YAN.

Belongs to the RbsD / FucU family. RbsD subfamily. In terms of assembly, homodecamer.

The protein localises to the cytoplasm. The catalysed reaction is beta-D-ribopyranose = beta-D-ribofuranose. Its pathway is carbohydrate metabolism; D-ribose degradation; D-ribose 5-phosphate from beta-D-ribopyranose: step 1/2. In terms of biological role, catalyzes the interconversion of beta-pyran and beta-furan forms of D-ribose. The protein is D-ribose pyranase of Clostridium tetani (strain Massachusetts / E88).